A 412-amino-acid chain; its full sequence is Imidazolonepropionase (412 aa).

The Fe(3+) site is built by histidine 76 and histidine 78. The Zn(2+) site is built by histidine 76 and histidine 78. The 4-imidazolone-5-propanoate site is built by arginine 85, tyrosine 148, and histidine 181. Position 148 (tyrosine 148) interacts with N-formimidoyl-L-glutamate. Position 242 (histidine 242) interacts with Fe(3+). Residue histidine 242 coordinates Zn(2+). Glutamate 245 is a binding site for 4-imidazolone-5-propanoate. Residue aspartate 317 coordinates Fe(3+). Aspartate 317 is a binding site for Zn(2+). 2 residues coordinate N-formimidoyl-L-glutamate: asparagine 319 and glycine 321. Residue serine 322 participates in 4-imidazolone-5-propanoate binding.

The protein belongs to the metallo-dependent hydrolases superfamily. HutI family. It depends on Zn(2+) as a cofactor. Fe(3+) serves as cofactor.

Its subcellular location is the cytoplasm. It carries out the reaction 4-imidazolone-5-propanoate + H2O = N-formimidoyl-L-glutamate. It participates in amino-acid degradation; L-histidine degradation into L-glutamate; N-formimidoyl-L-glutamate from L-histidine: step 3/3. In terms of biological role, catalyzes the hydrolytic cleavage of the carbon-nitrogen bond in imidazolone-5-propanoate to yield N-formimidoyl-L-glutamate. It is the third step in the universal histidine degradation pathway. In Staphylococcus saprophyticus subsp. saprophyticus (strain ATCC 15305 / DSM 20229 / NCIMB 8711 / NCTC 7292 / S-41), this protein is Imidazolonepropionase.